The chain runs to 218 residues: Ribose-5-phosphate isomerase A (218 aa).

Substrate-binding positions include 28 to 31 (TGST), 81 to 84 (DGAD), and 94 to 97 (KGGG). The Proton acceptor role is filled by Glu-103. Residue Lys-121 coordinates substrate.

This sequence belongs to the ribose 5-phosphate isomerase family. As to quaternary structure, homodimer.

The catalysed reaction is aldehydo-D-ribose 5-phosphate = D-ribulose 5-phosphate. Its pathway is carbohydrate degradation; pentose phosphate pathway; D-ribose 5-phosphate from D-ribulose 5-phosphate (non-oxidative stage): step 1/1. In terms of biological role, catalyzes the reversible conversion of ribose-5-phosphate to ribulose 5-phosphate. This Methylococcus capsulatus (strain ATCC 33009 / NCIMB 11132 / Bath) protein is Ribose-5-phosphate isomerase A.